Reading from the N-terminus, the 526-residue chain is Peptide chain release factor 3 (526 aa).

The tr-type G domain maps to 9–277 (DKRRTFAIIS…GIVEWAPKPL (269 aa)). GTP is bound by residues 18 to 25 (SHPDAGKT), 86 to 90 (DTPGH), and 140 to 143 (NKLD).

The protein belongs to the TRAFAC class translation factor GTPase superfamily. Classic translation factor GTPase family. PrfC subfamily.

It localises to the cytoplasm. Functionally, increases the formation of ribosomal termination complexes and stimulates activities of RF-1 and RF-2. It binds guanine nucleotides and has strong preference for UGA stop codons. It may interact directly with the ribosome. The stimulation of RF-1 and RF-2 is significantly reduced by GTP and GDP, but not by GMP. The protein is Peptide chain release factor 3 of Shewanella putrefaciens (strain CN-32 / ATCC BAA-453).